The chain runs to 182 residues: Peptidyl-tRNA hydrolase (182 aa).

Tyrosine 14 is a binding site for tRNA. The active-site Proton acceptor is histidine 19. The tRNA site is built by phenylalanine 64, asparagine 66, and asparagine 112.

It belongs to the PTH family. In terms of assembly, monomer.

It is found in the cytoplasm. It carries out the reaction an N-acyl-L-alpha-aminoacyl-tRNA + H2O = an N-acyl-L-amino acid + a tRNA + H(+). In terms of biological role, hydrolyzes ribosome-free peptidyl-tRNAs (with 1 or more amino acids incorporated), which drop off the ribosome during protein synthesis, or as a result of ribosome stalling. Its function is as follows. Catalyzes the release of premature peptidyl moieties from peptidyl-tRNA molecules trapped in stalled 50S ribosomal subunits, and thus maintains levels of free tRNAs and 50S ribosomes. In Wolbachia sp. subsp. Brugia malayi (strain TRS), this protein is Peptidyl-tRNA hydrolase.